A 134-amino-acid chain; its full sequence is Large ribosomal subunit protein uL16c (134 aa).

Residues 1–21 (MLSPKRTKYRKHHRGRMRGKA) form a disordered region.

The protein belongs to the universal ribosomal protein uL16 family. As to quaternary structure, part of the 50S ribosomal subunit.

The protein localises to the plastid. Its subcellular location is the chloroplast. This Chlorella vulgaris (Green alga) protein is Large ribosomal subunit protein uL16c.